The primary structure comprises 231 residues: Ribonuclease 3 (231 aa).

The RNase III domain maps to 7-135 (IQAIESKLNF…ILGAVYLDGG (129 aa)). Mg(2+) is bound at residue E48. The active site involves D52. Mg(2+)-binding residues include N121 and E124. Residue E124 is part of the active site. In terms of domain architecture, DRBM spans 160 to 229 (NPKNRLQQFT…AKQALSTHDN (70 aa)).

Belongs to the ribonuclease III family. In terms of assembly, homodimer. Mg(2+) is required as a cofactor.

The protein localises to the cytoplasm. The catalysed reaction is Endonucleolytic cleavage to 5'-phosphomonoester.. Functionally, digests double-stranded RNA. Involved in the processing of primary rRNA transcript to yield the immediate precursors to the large and small rRNAs (23S and 16S). Processes some mRNAs, and tRNAs when they are encoded in the rRNA operon. Processes pre-crRNA and tracrRNA of type II CRISPR loci if present in the organism. In Chlamydia trachomatis serovar L2 (strain ATCC VR-902B / DSM 19102 / 434/Bu), this protein is Ribonuclease 3.